The sequence spans 549 residues: Glucose-6-phosphate isomerase (549 aa).

The active-site Proton donor is E353. Catalysis depends on residues H384 and K510.

The protein belongs to the GPI family.

The protein resides in the cytoplasm. It carries out the reaction alpha-D-glucose 6-phosphate = beta-D-fructose 6-phosphate. It participates in carbohydrate biosynthesis; gluconeogenesis. Its pathway is carbohydrate degradation; glycolysis; D-glyceraldehyde 3-phosphate and glycerone phosphate from D-glucose: step 2/4. Its function is as follows. Catalyzes the reversible isomerization of glucose-6-phosphate to fructose-6-phosphate. The chain is Glucose-6-phosphate isomerase from Mycolicibacterium smegmatis (Mycobacterium smegmatis).